The primary structure comprises 940 residues: Coatomer subunit beta (940 aa).

HEAT repeat units follow at residues Phe-11–Ser-48, Gln-90–Glu-125, Leu-126–His-162, and Ser-310–Val-347.

Oligomeric complex that consists of at least the alpha, beta, beta', gamma, delta, epsilon and zeta subunits.

The protein localises to the cytoplasm. It is found in the golgi apparatus membrane. Its subcellular location is the cytoplasmic vesicle. The protein resides in the COPI-coated vesicle membrane. Its function is as follows. The coatomer is a cytosolic protein complex that binds to dilysine motifs and reversibly associates with Golgi non-clathrin-coated vesicles, which further mediate biosynthetic protein transport from the ER, via the Golgi up to the trans Golgi network. Coatomer complex is required for budding from Golgi membranes, and is essential for the retrograde Golgi-to-ER transport of dilysine-tagged proteins. This is Coatomer subunit beta (sec26) from Schizosaccharomyces pombe (strain 972 / ATCC 24843) (Fission yeast).